A 256-amino-acid polypeptide reads, in one-letter code: Ribosomal RNA small subunit methyltransferase J (256 aa).

Residues 101 to 102 (RD), 117 to 118 (ER), 153 to 154 (SS), and Asp-176 each bind S-adenosyl-L-methionine.

This sequence belongs to the methyltransferase superfamily. RsmJ family.

The protein localises to the cytoplasm. The catalysed reaction is guanosine(1516) in 16S rRNA + S-adenosyl-L-methionine = N(2)-methylguanosine(1516) in 16S rRNA + S-adenosyl-L-homocysteine + H(+). Specifically methylates the guanosine in position 1516 of 16S rRNA. This Photobacterium profundum (strain SS9) protein is Ribosomal RNA small subunit methyltransferase J.